Here is a 278-residue protein sequence, read N- to C-terminus: Pantothenate synthetase (278 aa).

30–37 (MGFLHEGH) contributes to the ATP binding site. The Proton donor role is filled by His-37. Gln-61 is a binding site for (R)-pantoate. Gln-61 contributes to the beta-alanine binding site. Residue 147–150 (GQKD) coordinates ATP. Gln-153 contributes to the (R)-pantoate binding site. Residues Val-176 and 184–187 (LSSR) contribute to the ATP site.

The protein belongs to the pantothenate synthetase family. In terms of assembly, homodimer.

The protein resides in the cytoplasm. It carries out the reaction (R)-pantoate + beta-alanine + ATP = (R)-pantothenate + AMP + diphosphate + H(+). It functions in the pathway cofactor biosynthesis; (R)-pantothenate biosynthesis; (R)-pantothenate from (R)-pantoate and beta-alanine: step 1/1. Its function is as follows. Catalyzes the condensation of pantoate with beta-alanine in an ATP-dependent reaction via a pantoyl-adenylate intermediate. The protein is Pantothenate synthetase of Thermosipho africanus (strain TCF52B).